Reading from the N-terminus, the 190-residue chain is Glutamyl-tRNA(Gln) amidotransferase subunit C, mitochondrial (190 aa).

The N-terminal 96 residues, 1 to 96, are a transit peptide targeting the mitochondrion; sequence MISFQIILQQ…VLNLKQAVRF (96 aa). Positions 28–57 are disordered; it reads KSNSTAVGSSDEDDEIYVPKKPIPSPIDQS.

It belongs to the GatC family. Subunit of the heterotrimeric GatCAB amidotransferase (AdT) complex, composed of A, B and C subunits.

It is found in the mitochondrion. The catalysed reaction is L-glutamyl-tRNA(Gln) + L-glutamine + ATP + H2O = L-glutaminyl-tRNA(Gln) + L-glutamate + ADP + phosphate + H(+). Allows the formation of correctly charged Gln-tRNA(Gln) through the transamidation of misacylated Glu-tRNA(Gln) in the mitochondria. The reaction takes place in the presence of glutamine and ATP through an activated gamma-phospho-Glu-tRNA(Gln). This Loa loa (Eye worm) protein is Glutamyl-tRNA(Gln) amidotransferase subunit C, mitochondrial.